Here is a 373-residue protein sequence, read N- to C-terminus: Putative glutamate--cysteine ligase 2-1 (373 aa).

The protein belongs to the glutamate--cysteine ligase type 2 family. YbdK subfamily.

The catalysed reaction is L-cysteine + L-glutamate + ATP = gamma-L-glutamyl-L-cysteine + ADP + phosphate + H(+). Functionally, ATP-dependent carboxylate-amine ligase which exhibits weak glutamate--cysteine ligase activity. In Legionella pneumophila (strain Lens), this protein is Putative glutamate--cysteine ligase 2-1.